The chain runs to 81 residues: RNA-binding protein Hfq (81 aa).

One can recognise a Sm domain in the interval 10 to 70; the sequence is DLFLNSVRKS…ISTIMPSQPV (61 aa).

The protein belongs to the Hfq family. As to quaternary structure, homohexamer.

Functionally, RNA chaperone that binds small regulatory RNA (sRNAs) and mRNAs to facilitate mRNA translational regulation in response to envelope stress, environmental stress and changes in metabolite concentrations. Also binds with high specificity to tRNAs. This is RNA-binding protein Hfq from Mesorhizobium japonicum (strain LMG 29417 / CECT 9101 / MAFF 303099) (Mesorhizobium loti (strain MAFF 303099)).